The sequence spans 230 residues: Orotidine 5'-phosphate decarboxylase (230 aa).

Substrate-binding positions include aspartate 10, lysine 32, 59–68, threonine 118, arginine 179, glutamine 188, glycine 208, and arginine 209; that span reads DLKLHDIPNT. Lysine 61 serves as the catalytic Proton donor.

This sequence belongs to the OMP decarboxylase family. Type 1 subfamily. In terms of assembly, homodimer.

The catalysed reaction is orotidine 5'-phosphate + H(+) = UMP + CO2. It participates in pyrimidine metabolism; UMP biosynthesis via de novo pathway; UMP from orotate: step 2/2. Its function is as follows. Catalyzes the decarboxylation of orotidine 5'-monophosphate (OMP) to uridine 5'-monophosphate (UMP). The chain is Orotidine 5'-phosphate decarboxylase from Opitutus terrae (strain DSM 11246 / JCM 15787 / PB90-1).